Consider the following 297-residue polypeptide: Adrenocorticotropic hormone receptor (297 aa).

The Extracellular segment spans residues 1–23 (MKHIINSYENINNTARNNSDCPR). N-linked (GlcNAc...) asparagine glycans are attached at residues Asn-12 and Asn-17. Disulfide bonds link Cys-21-Cys-253 and Cys-245-Cys-251. The helical transmembrane segment at 24–49 (VVLPEEIFFTISIVGVLENLIVLLAV) threads the bilayer. At 50–58 (FKNKNLQAP) the chain is on the cytoplasmic side. Residues 59–79 (MYFFICSLAISDMLGSLYKIL) form a helical membrane-spanning segment. Residues 80–104 (ENILIILRNMGYLKPRGSFETTADD) lie on the Extracellular side of the membrane. The helical transmembrane segment at 105 to 126 (IIDSLFVLSLLGSIFSLSVIAA) threads the bilayer. The Cytoplasmic segment spans residues 127-147 (DRYITIFHALRYHSIVTMRRT). A helical transmembrane segment spans residues 148-168 (VVVLTVIWTFCTGTGITMVIF). Topologically, residues 169–180 (SHHVPTVITFTS) are extracellular. The helical transmembrane segment at 181-199 (LFPLMLVFILCLYVHMFLL) threads the bilayer. At 200 to 217 (ARSHTRKISTLPRANMKG) the chain is on the cytoplasmic side. A helical transmembrane segment spans residues 218-244 (AITLTILLGVFIFCWAPFVLHVLLMTF). Residues 245 to 256 (CPSNPYCACYMS) are Extracellular-facing. The helical transmembrane segment at 257-278 (LFQVNGMLIMCNAVIDPFIYAF) threads the bilayer. Residues 279–297 (RSPELRDAFKKMIFCSRYW) are Cytoplasmic-facing. Cys-293 carries S-palmitoyl cysteine lipidation.

This sequence belongs to the G-protein coupled receptor 1 family. In terms of assembly, homodimer. Interacts with corticotropin (ACTH). Interacts with MRAP; this interaction targets MC2R to the plasma membrane. Interacts with MRAP2; competing with MRAP for binding to MC2R and impairing the binding of corticotropin (ACTH). In terms of processing, ubiquitinated by MGRN1 that may be involved in post-endocytic trafficking and/or degradation of internalized receptor. As to expression, melanocytes and corticoadrenal tissue.

It localises to the cell membrane. Functionally, hormone receptor primarily expressed in adrenal cortex that plays a key role in regulating adrenocortical function. Upon corticotropin (ACTH) binding, facilitates the release of adrenal glucocorticoids, including cortisol and corticosterone. In addition, MC2R is required for fetal and neonatal adrenal gland development. Mechanistically, activates adenylate cyclase (cAMP), the MAPK cascade as well as the cAMP-dependent protein kinase A pathway leading to steroidogenic factor 1/NR5A1-mediated transcriptional activation. In Homo sapiens (Human), this protein is Adrenocorticotropic hormone receptor (MC2R).